The chain runs to 259 residues: Ribonuclease HII (259 aa).

The RNase H type-2 domain occupies 70–258 (TLIAGIDEVG…VKSLVLGKKE (189 aa)). A divalent metal cation is bound by residues Asp76, Glu77, and Asp168.

It belongs to the RNase HII family. Requires Mn(2+) as cofactor. Mg(2+) is required as a cofactor.

Its subcellular location is the cytoplasm. The enzyme catalyses Endonucleolytic cleavage to 5'-phosphomonoester.. Functionally, endonuclease that specifically degrades the RNA of RNA-DNA hybrids. The chain is Ribonuclease HII from Streptococcus pneumoniae (strain 70585).